Consider the following 439-residue polypeptide: 23S rRNA (uracil(1939)-C(5))-methyltransferase RlmD (439 aa).

The TRAM domain occupies 10–69 (KTQLNTRHQAVQVERLDHHGAGIAYLKKKPLFIDGALPGEEVVTQLVEEKSKFARGKLIK). Positions 82, 88, 91, and 169 each coordinate [4Fe-4S] cluster. S-adenosyl-L-methionine contacts are provided by Gln272, Phe301, Asn306, Glu322, Asn349, and Asp370. The active-site Nucleophile is Cys396.

This sequence belongs to the class I-like SAM-binding methyltransferase superfamily. RNA M5U methyltransferase family. RlmD subfamily.

It carries out the reaction uridine(1939) in 23S rRNA + S-adenosyl-L-methionine = 5-methyluridine(1939) in 23S rRNA + S-adenosyl-L-homocysteine + H(+). Catalyzes the formation of 5-methyl-uridine at position 1939 (m5U1939) in 23S rRNA. This chain is 23S rRNA (uracil(1939)-C(5))-methyltransferase RlmD, found in Vibrio campbellii (strain ATCC BAA-1116).